The chain runs to 360 residues: Geranylgeranyl pyrophosphate synthase 12, chloroplastic (360 aa).

A chloroplast-targeting transit peptide spans 1-39; that stretch reads MANTVHLSSSSLFIQTRGRKYNSILSFNNLQKRTVLSLS. 3 residues coordinate isopentenyl diphosphate: Lys-106, Arg-109, and His-138. Residues Asp-145 and Asp-151 each contribute to the Mg(2+) site. Residue Arg-156 coordinates dimethylallyl diphosphate. Arg-157 contacts isopentenyl diphosphate. 5 residues coordinate dimethylallyl diphosphate: Lys-245, Thr-246, Gln-283, Lys-300, and Lys-310.

The protein belongs to the FPP/GGPP synthase family. Monomer. Mg(2+) serves as cofactor.

It localises to the plastid. It is found in the chloroplast. The catalysed reaction is isopentenyl diphosphate + dimethylallyl diphosphate = (2E)-geranyl diphosphate + diphosphate. It carries out the reaction isopentenyl diphosphate + (2E)-geranyl diphosphate = (2E,6E)-farnesyl diphosphate + diphosphate. It catalyses the reaction isopentenyl diphosphate + (2E,6E)-farnesyl diphosphate = (2E,6E,10E)-geranylgeranyl diphosphate + diphosphate. Its pathway is isoprenoid biosynthesis; farnesyl diphosphate biosynthesis; farnesyl diphosphate from geranyl diphosphate and isopentenyl diphosphate: step 1/1. The protein operates within isoprenoid biosynthesis; geranyl diphosphate biosynthesis; geranyl diphosphate from dimethylallyl diphosphate and isopentenyl diphosphate: step 1/1. It participates in isoprenoid biosynthesis; geranylgeranyl diphosphate biosynthesis; geranylgeranyl diphosphate from farnesyl diphosphate and isopentenyl diphosphate: step 1/1. Functionally, catalyzes the trans-addition of the three molecules of IPP onto DMAPP to form geranylgeranyl pyrophosphate. The polypeptide is Geranylgeranyl pyrophosphate synthase 12, chloroplastic (Arabidopsis thaliana (Mouse-ear cress)).